The primary structure comprises 160 residues: Cytochrome b6-f complex subunit 4 (160 aa).

A run of 3 helical transmembrane segments spans residues 36–56 (LLYM…GLAV), 95–115 (LLGV…PFIE), and 131–151 (TIFL…TLPI).

The protein belongs to the cytochrome b family. PetD subfamily. In terms of assembly, the 4 large subunits of the cytochrome b6-f complex are cytochrome b6, subunit IV (17 kDa polypeptide, petD), cytochrome f and the Rieske protein, while the 4 small subunits are petG, petL, petM and petN. The complex functions as a dimer.

The protein resides in the plastid. The protein localises to the chloroplast thylakoid membrane. In terms of biological role, component of the cytochrome b6-f complex, which mediates electron transfer between photosystem II (PSII) and photosystem I (PSI), cyclic electron flow around PSI, and state transitions. The polypeptide is Cytochrome b6-f complex subunit 4 (Staurastrum punctulatum (Green alga)).